The following is a 990-amino-acid chain: MMNILLEELPHQEQALAAILASFTGIDHAQADHNHYANPLIKERYDDKANIDVKMETGTGKTYVYTRLMYELHQKYGLFKFVLVVPTPAIKEGARNFITSDYARQHFSQFYENTRMELCTINAGDFKVKSGRKNFPAQLLSFTDASRRDSHTIQVLLINAQMLNSASMTRDDYDQTLLGGLTSPVKGLQMTRPVVIIDEPHRFARDNKFYRAIQAIQPQMIVRFGATFPDIVEGKGKNKCVRKDYYRRQPQFDLNAVDSFNDGLVKGIDIYYPNLPEEQANNRYIVDSVTAKKLILRRGSKIAEVGVGENLADVDAGFEGSIEYAGSKMLSNDLELEAGMALVPGTFGASYQELIIQDAIDKHFDTEQANFLRSNEPENNAPRIKTLSLFFIDSIKSYRDDEGWLKVTFERLLKKKLTQLIDDYQRKTLPREVEYLSFLQATLASLHSDNQNVHAGYFGEDRGSGDEAIQAEVDDILKNKEKLLSFSDHHGNWETRRFLFSKWTLREGWDNPNVFVIAKLRSSGSESSKIQEVGRGLRLPVDENGHRVHQEEWPSRLSFLIGYDEKAFASMLVDEINRDSKVQLNEQKLDEAMITLIVTERQKVDPAFTELRLLEDLDDKKLINRSNEFKPSVTLNGETKSGFAWLLEFYPELTQARVRADRIRDNKPASRLRVRLRKENWEQLSSIWEQFSRRYMLQFERSGASLEQIAAEVLRDPALYIRQKPSQVQQRLVSNEDNGRFEVAQREGELAASEFMAGMKYGHFLKQLALRTSLPVNVLHPVLMAMLRDVLHGDSRYLSEISLDNMTRALQTRINAHFAQRHDYLPLDFQASTSVFDSTARQFREEISAEIVGKNVDENAIDDPRSLYQIPPLRYDSVDPELPLLKYDYPQQVSVFGKLPKRAIQIPKYTGGSTTPDFVYRIERQDADSVYLLVETKAENMRVGDQVILDAQRKFFDMLRRQNINVEFAEATSAPAVFSTINGLIEGKAN.

A helicase-like domain region spans residues 50–545 (NIDVKMETGT…GLRLPVDENG (496 aa)). The VRR-NUC domain maps to 884–970 (LLKYDYPQQV…RQNINVEFAE (87 aa)). Residues 913 to 937 (STTPDFVYRIERQDADSVYLLVETK) are endonuclease domain.

This sequence belongs to the type III restriction-modification system Res protein family. In terms of assembly, contains two different subunits: Res and Mod. Mg(2+) is required as a cofactor. S-adenosyl-L-methionine serves as cofactor.

The catalysed reaction is Endonucleolytic cleavage of DNA to give specific double-stranded fragments with terminal 5'-phosphates.. Functionally, a type III restriction enzyme that recognizes 2 inversely oriented double-stranded sequences 5'-CAGAG-3' and cleaves DNA 25-27 base pairs downstream. After binding to one recognition site undergoes random one-dimensional diffusion along DNA until it collides with a stationary enzyme bound to the second DNA site, which is when DNA cleavage occurs. DNA restriction requires both the Res and Mod subunits. This chain is Type III restriction-modification enzyme StyLTI Res subunit, found in Salmonella typhimurium (strain LT2 / SGSC1412 / ATCC 700720).